The sequence spans 1155 residues: DNA mismatch repair protein MLH3 (1155 aa).

The protein belongs to the DNA mismatch repair MutL/HexB family. As to quaternary structure, heterodimer of MLH1 and MLH3, called MutLbeta, which is involved in correction of a specific subset of IDLs when associated with MutSbeta. As to expression, expressed in reproductive tissues.

It localises to the nucleus. Its function is as follows. Involved in DNA mismatch repair (MMR), correcting insertion-deletion loops (IDLs) resulting from DNA replication, DNA damage or from recombination events between non-identical sequences during meiosis. Component of the MutLbeta heterodimer, which probably forms a ternary complex with the MutSbeta heterodimer that initially recognizes the DNA mismatches. This complex is thought to be responsible for directing the downstream MMR events, including strand discrimination, excision, and resynthesis. Plays a major role in promoting meiotic crossing-over and is involved in maintaining the genetic stability of simple sequence repeats by correction of frameshift intermediates. The sequence is that of DNA mismatch repair protein MLH3 (MLH3) from Arabidopsis thaliana (Mouse-ear cress).